We begin with the raw amino-acid sequence, 341 residues long: Anthranilate phosphoribosyltransferase (341 aa).

Residues Gly81, 84-85, Thr89, 91-94, 109-117, and Thr121 each bind 5-phospho-alpha-D-ribose 1-diphosphate; these read GD, NIST, and KHGNRKASS. Gly81 lines the anthranilate pocket. Residue Ser93 coordinates Mg(2+). Asn112 provides a ligand contact to anthranilate. Arg167 contributes to the anthranilate binding site. Mg(2+)-binding residues include Asp226 and Glu227.

This sequence belongs to the anthranilate phosphoribosyltransferase family. In terms of assembly, homodimer. Mg(2+) serves as cofactor.

The catalysed reaction is N-(5-phospho-beta-D-ribosyl)anthranilate + diphosphate = 5-phospho-alpha-D-ribose 1-diphosphate + anthranilate. Its pathway is amino-acid biosynthesis; L-tryptophan biosynthesis; L-tryptophan from chorismate: step 2/5. Its function is as follows. Catalyzes the transfer of the phosphoribosyl group of 5-phosphorylribose-1-pyrophosphate (PRPP) to anthranilate to yield N-(5'-phosphoribosyl)-anthranilate (PRA). This chain is Anthranilate phosphoribosyltransferase, found in Parvibaculum lavamentivorans (strain DS-1 / DSM 13023 / NCIMB 13966).